A 679-amino-acid chain; its full sequence is Methionine--tRNA ligase (679 aa).

The 'HIGH' region motif lies at 14-24 (PYANGSIHLGH). The Zn(2+) site is built by C145, C148, C158, and C161. Positions 331 to 335 (KMSKS) match the 'KMSKS' region motif. An ATP-binding site is contributed by K334. A tRNA-binding domain is found at 577 to 679 (TFAAVDLRVA…SGAKPGQRIK (103 aa)).

The protein belongs to the class-I aminoacyl-tRNA synthetase family. MetG type 1 subfamily. In terms of assembly, homodimer. Zn(2+) serves as cofactor.

The protein resides in the cytoplasm. The catalysed reaction is tRNA(Met) + L-methionine + ATP = L-methionyl-tRNA(Met) + AMP + diphosphate. In terms of biological role, is required not only for elongation of protein synthesis but also for the initiation of all mRNA translation through initiator tRNA(fMet) aminoacylation. In Pseudomonas entomophila (strain L48), this protein is Methionine--tRNA ligase.